A 245-amino-acid polypeptide reads, in one-letter code: Ribonuclease PH (245 aa).

Phosphate is bound by residues Arg87 and 125-127; that span reads GTR.

It belongs to the RNase PH family. As to quaternary structure, homohexameric ring arranged as a trimer of dimers.

It carries out the reaction tRNA(n+1) + phosphate = tRNA(n) + a ribonucleoside 5'-diphosphate. In terms of biological role, phosphorolytic 3'-5' exoribonuclease that plays an important role in tRNA 3'-end maturation. Removes nucleotide residues following the 3'-CCA terminus of tRNAs; can also add nucleotides to the ends of RNA molecules by using nucleoside diphosphates as substrates, but this may not be physiologically important. Probably plays a role in initiation of 16S rRNA degradation (leading to ribosome degradation) during starvation. The chain is Ribonuclease PH from Streptomyces coelicolor (strain ATCC BAA-471 / A3(2) / M145).